A 525-amino-acid polypeptide reads, in one-letter code: GMP synthase [glutamine-hydrolyzing] (525 aa).

Residues 9 to 207 form the Glutamine amidotransferase type-1 domain; sequence RILILDFGSQ…VLQLCACEKL (199 aa). The active-site Nucleophile is C86. Active-site residues include H181 and E183. One can recognise a GMPS ATP-PPase domain in the interval 208–400; the sequence is WTPANIVEDA…LGLPYDMVYR (193 aa). 235-241 lines the ATP pocket; it reads SGGVDSS.

As to quaternary structure, homodimer.

The catalysed reaction is XMP + L-glutamine + ATP + H2O = GMP + L-glutamate + AMP + diphosphate + 2 H(+). It participates in purine metabolism; GMP biosynthesis; GMP from XMP (L-Gln route): step 1/1. Catalyzes the synthesis of GMP from XMP. This is GMP synthase [glutamine-hydrolyzing] from Cellvibrio japonicus (strain Ueda107) (Pseudomonas fluorescens subsp. cellulosa).